Consider the following 102-residue polypeptide: ATP-dependent Clp protease adapter protein ClpS (102 aa).

It belongs to the ClpS family. As to quaternary structure, binds to the N-terminal domain of the chaperone ClpA.

Involved in the modulation of the specificity of the ClpAP-mediated ATP-dependent protein degradation. This chain is ATP-dependent Clp protease adapter protein ClpS, found in Shewanella oneidensis (strain ATCC 700550 / JCM 31522 / CIP 106686 / LMG 19005 / NCIMB 14063 / MR-1).